Consider the following 501-residue polypeptide: Putative matrix metalloproteinase (501 aa).

A signal peptide spans 1–26 (MMPQYERKQIIIHISCVIICVVVTLT). 6 N-linked (GlcNAc...) asparagine; by host glycosylation sites follow: Asn48, Asn58, Asn61, Asn94, Asn116, and Asn163. His179 contributes to the Zn(2+) binding site. Residue Glu180 is part of the active site. Residues His183 and His189 each contribute to the Zn(2+) site. Residues Asn192, Asn267, Asn280, and Asn291 are each glycosylated (N-linked (GlcNAc...) asparagine; by host). One copy of the Hemopexin repeat lies at 311-356 (TGHIDTISVIRGELYIFVDEYHWRFRSNGLLYSGYPLKTTHSWSVP). Asn379 and Asn493 each carry an N-linked (GlcNAc...) asparagine; by host glycan.

The protein belongs to the peptidase M10A family. Requires Zn(2+) as cofactor.

In Trichoplusia ni ascovirus 2c (TnAV-2c), this protein is Putative matrix metalloproteinase.